Consider the following 105-residue polypeptide: uncharacterized protein (105 aa).

The ABM domain maps to 14–104; the sequence is HYITACLKII…VEWLMKSNVN (91 aa).

This is an uncharacterized protein from Bacillus subtilis (strain 168).